The sequence spans 274 residues: 3-methyl-2-oxobutanoate hydroxymethyltransferase (274 aa).

Mg(2+) is bound by residues D49 and D88. 3-methyl-2-oxobutanoate is bound by residues 49-50 (DS), D88, and K118. E120 contributes to the Mg(2+) binding site. E187 (proton acceptor) is an active-site residue.

This sequence belongs to the PanB family. As to quaternary structure, homodecamer; pentamer of dimers. Requires Mg(2+) as cofactor.

Its subcellular location is the cytoplasm. The catalysed reaction is 3-methyl-2-oxobutanoate + (6R)-5,10-methylene-5,6,7,8-tetrahydrofolate + H2O = 2-dehydropantoate + (6S)-5,6,7,8-tetrahydrofolate. It functions in the pathway cofactor biosynthesis; (R)-pantothenate biosynthesis; (R)-pantoate from 3-methyl-2-oxobutanoate: step 1/2. Functionally, catalyzes the reversible reaction in which hydroxymethyl group from 5,10-methylenetetrahydrofolate is transferred onto alpha-ketoisovalerate to form ketopantoate. The protein is 3-methyl-2-oxobutanoate hydroxymethyltransferase of Rhodopseudomonas palustris (strain BisB18).